Here is a 563-residue protein sequence, read N- to C-terminus: Coiled-coil domain-containing protein 63 (563 aa).

The disordered stretch occupies residues 1-29; the sequence is MSVLKKNRRKDSDTPQEPSEKAKEQQAEA. The segment covering 10–29 has biased composition (basic and acidic residues); it reads KDSDTPQEPSEKAKEQQAEA. Coiled-coil stretches lie at residues 18-201, 233-291, and 341-422; these read PSEK…QLQH, AMKD…AKKH, and TELN…KKIN.

Its function is as follows. Plays a role in spermiogenesis. Involved in the elongation of flagella and the formation of sperm heads. This Homo sapiens (Human) protein is Coiled-coil domain-containing protein 63.